Here is a 149-residue protein sequence, read N- to C-terminus: SsrA-binding protein (149 aa).

This sequence belongs to the SmpB family.

The protein resides in the cytoplasm. Its function is as follows. Required for rescue of stalled ribosomes mediated by trans-translation. Binds to transfer-messenger RNA (tmRNA), required for stable association of tmRNA with ribosomes. tmRNA and SmpB together mimic tRNA shape, replacing the anticodon stem-loop with SmpB. tmRNA is encoded by the ssrA gene; the 2 termini fold to resemble tRNA(Ala) and it encodes a 'tag peptide', a short internal open reading frame. During trans-translation Ala-aminoacylated tmRNA acts like a tRNA, entering the A-site of stalled ribosomes, displacing the stalled mRNA. The ribosome then switches to translate the ORF on the tmRNA; the nascent peptide is terminated with the 'tag peptide' encoded by the tmRNA and targeted for degradation. The ribosome is freed to recommence translation, which seems to be the essential function of trans-translation. This is SsrA-binding protein from Mesoplasma florum (strain ATCC 33453 / NBRC 100688 / NCTC 11704 / L1) (Acholeplasma florum).